Reading from the N-terminus, the 489-residue chain is Zinc finger protein 772 (489 aa).

Residues 27–98 form the KRAB domain; that stretch reads VNFEDVFVYF…DWVDMTLAVA (72 aa). C2H2-type zinc fingers lie at residues 144–166, 172–194, 266–288, 294–316, 322–344, 350–372, 378–400, 406–428, 434–456, and 462–484; these read YPCG…QETH, YMCV…QKQH, YKCS…QRVH, YECG…QRIH, YECG…QRVH, YKCS…ESIH, YECS…WSVH, YECI…QRVH, YVCS…HRIH, and YKCS…WKIH.

This sequence belongs to the krueppel C2H2-type zinc-finger protein family.

It localises to the nucleus. Its function is as follows. May be involved in transcriptional regulation. This is Zinc finger protein 772 (ZNF772) from Homo sapiens (Human).